We begin with the raw amino-acid sequence, 179 residues long: Arginine repressor (179 aa).

Belongs to the ArgR family.

The protein localises to the cytoplasm. It participates in amino-acid biosynthesis; L-arginine biosynthesis [regulation]. Its function is as follows. Regulates arginine biosynthesis genes. The polypeptide is Arginine repressor (Renibacterium salmoninarum (strain ATCC 33209 / DSM 20767 / JCM 11484 / NBRC 15589 / NCIMB 2235)).